Consider the following 282-residue polypeptide: D-arabinitol 2-dehydrogenase [ribulose-forming] (282 aa).

2 residues coordinate NADP(+): L32 and N53. S170 serves as the catalytic Proton donor. The NADP(+) site is built by Y185, K189, I218, and T220. The Proton acceptor role is filled by Y185. K189 functions as the Lowers pKa of active site Tyr in the catalytic mechanism.

Belongs to the short-chain dehydrogenases/reductases (SDR) family.

The enzyme catalyses D-arabinitol + NAD(+) = D-ribulose + NADH + H(+). It functions in the pathway carbohydrate metabolism; D-arabinitol metabolism. Its function is as follows. Catalyzes the NAD(+)-dependent oxidation of D-arabinitol at carbon 4 to produce D-ribulose. This Candida tropicalis (Yeast) protein is D-arabinitol 2-dehydrogenase [ribulose-forming] (ARD).